Reading from the N-terminus, the 222-residue chain is Ribosomal RNA small subunit methyltransferase G (222 aa).

S-adenosyl-L-methionine is bound by residues glycine 82, leucine 87, 132–133 (AE), and arginine 150.

This sequence belongs to the methyltransferase superfamily. RNA methyltransferase RsmG family.

The protein resides in the cytoplasm. In terms of biological role, specifically methylates the N7 position of guanine in position 518 of 16S rRNA. The chain is Ribosomal RNA small subunit methyltransferase G from Corynebacterium jeikeium (strain K411).